Consider the following 3046-residue polypeptide: Nucleosome-remodeling factor subunit BPTF (3046 aa).

The disordered stretch occupies residues 1 to 232 (MRGRRGRPPK…DIPPLEFPKS (232 aa)). The span at 22–33 (PAPPPPPPPPTS) shows a compositional bias: pro residues. Low complexity predominate over residues 62 to 72 (TRLSSPRGGSS). Positions 78–87 (PPPPPAPPST) are enriched in pro residues. Residues 91–110 (GRGGRGGGGGRTGGGGGGGH) show a composition bias toward gly residues. Residues 129–186 (HESEEEEEEEDMVSEEEEEEDGDAEETQDSEDDEEDEMEEDDDDSDYPEEMEDDDDDA) are compositionally biased toward acidic residues. The span at 190–203 (TESSFRSHSTYSST) shows a compositional bias: low complexity. Residues 205-215 (GRRKPRVHRPR) show a composition bias toward basic residues. Ser-216 is subject to Phosphoserine. One can recognise a DDT domain in the interval 240-300 (NEHIMNVIAI…LKAVLREEDT (61 aa)). The PHD-type 1 zinc-finger motif lies at 390–437 (DDHCRVCHKLGDLLCCETCSAVYHLECVKPPLEEVPEDEWQCEVCVAH). 2 stretches are compositionally biased toward basic and acidic residues: residues 567–609 (IDNV…SDDK) and 616–628 (EQGK…EVGD). The tract at residues 567-774 (IDNVKSPEET…GAGKGASGST (208 aa)) is disordered. Ser-572 carries the phosphoserine modification. Residues 574-604 (EETEKDKNETENDSKDAEKNREEFEDQSLEK) adopt a coiled-coil conformation. 2 stretches are compositionally biased toward polar residues: residues 631-653 (NSVS…SPSE) and 690-705 (TCES…SIQP). An interaction with KEAP1 region spans residues 640–749 (NTTNATSEET…PVSIQEEIVG (110 aa)). Positions 706-723 (NLENSNSSSELNSSQSES) are enriched in low complexity. Positions 725 to 738 (KAADDPENGERESH) are enriched in basic and acidic residues. A phosphoserine mark is found at Ser-763 and Ser-817. Residues 839–921 (YFKLGQEGKY…QLENNIPSSF (83 aa)) form an interaction with MAZ region. An N6-acetyllysine modification is found at Lys-880. Residues 978 to 1007 (MTSIEREEKEKVKKKEKKQEEEETMQQATW) adopt a coiled-coil conformation. Positions 1057-1157 (YRKSLEGTKN…MKTESHVNCQ (101 aa)) are disordered. Thr-1064 bears the Phosphothreonine mark. 2 stretches are compositionally biased toward basic and acidic residues: residues 1087-1102 (IKIE…KGSD) and 1113-1152 (DISK…KTES). Glycyl lysine isopeptide (Lys-Gly) (interchain with G-Cter in SUMO2) cross-links involve residues Lys-1088, Lys-1138, and Lys-1209. 4 disordered regions span residues 1215 to 1339 (KGIG…GNDF), 1371 to 1448 (IVSS…FRTR), 1465 to 1537 (GEST…NGKD), and 1605 to 1706 (NSSE…GESK). Polar residues-rich tracts occupy residues 1220-1232 (TSTN…SESP), 1242-1257 (QSDS…ANND), and 1266-1285 (CSES…TTNK). The residue at position 1231 (Ser-1231) is a Phosphoserine. Over residues 1287–1305 (YPKDRVLDDVSIRSPETKC) the composition is skewed to basic and acidic residues. Position 1300 is a phosphoserine (Ser-1300). Thr-1303 carries the post-translational modification Phosphothreonine. Residue Ser-1310 is modified to Phosphoserine. Low complexity predominate over residues 1372 to 1386 (VSSSKSALHSSVPKS). 2 stretches are compositionally biased toward polar residues: residues 1409–1426 (SESN…SIQD) and 1434–1444 (VQNSNESISEQ). Basic and acidic residues predominate over residues 1491 to 1525 (KKLEERPVNKCSDQIKLKNTTDKKNNENRESEKKG). Residues 1629–1656 (TLPSTKESDSTQTTTPSASCPESNSVNQ) are compositionally biased toward polar residues. Residue Lys-1730 forms a Glycyl lysine isopeptide (Lys-Gly) (interchain with G-Cter in SUMO2) linkage. 2 disordered regions span residues 1973-2003 (VPET…TPKQ) and 2041-2070 (QAKK…STIS). Positions 2022–2050 (EIRAFAERVEKEKAQAVEQQAKKRLEQQK) form a coiled coil. Residues 2054-2070 (IATSTTSPTSSTTSTIS) are compositionally biased toward low complexity. Ser-2098 carries the phosphoserine modification. An Omega-N-methylarginine modification is found at Arg-2155. The segment at 2160–2180 (TIRPNTSGSGGTTSNSQVITG) is disordered. An asymmetric dimethylarginine mark is found at Arg-2162, Arg-2184, and Arg-2191. A compositionally biased stretch (polar residues) spans 2232-2256 (VSAPNTVSSTPGQKSLTSATSTSNI). Disordered stretches follow at residues 2232-2270 (VSAP…QQGQ), 2346-2549 (TAST…RPQL), 2714-2733 (QAAK…SKQN), and 2795-2858 (PCPP…ISTT). Composition is skewed to low complexity over residues 2257-2270 (QSSA…QQGQ) and 2346-2362 (TAST…AGTG). Positions 2363 to 2375 (EQRQSKLSPQMQV) are enriched in polar residues. Residues 2391–2431 (PAEAQPQTAQPSAQPQPQTQPQSPAQPEVQTQPEVQTQTTV) are compositionally biased toward low complexity. The span at 2432–2485 (SSHVPSEAQPTHAQSSKPQVAAQSQPQSNVQGQSPVRVQSPSQTRIRPSTPSQL) shows a compositional bias: polar residues. Ser-2465 is subject to Phosphoserine. Over residues 2486 to 2538 (SPGQQSQVQTTTSQPIPIQPHTSLQIPSQGQPQSQPQVQSSTQTLSSGQTLNQ) the composition is skewed to low complexity. Residues 2706 to 2732 (DKIDKEEKQAAKKRKREESVEQKRSKQ) are a coiled coil. A compositionally biased stretch (basic and acidic residues) spans 2714 to 2729 (QAAKKRKREESVEQKR). The segment covering 2795–2818 (PCPPVTPAPPAPPAPPPSPPPPPA) has biased composition (pro residues). A compositionally biased stretch (basic and acidic residues) spans 2838–2847 (KREEEKDSSS). Residues 2867-2918 (KLYCICKTPYDESKFYIGCDRCQNWYHGRCVGILQSEAELIDEYVCPQCQST) form a PHD-type 2 zinc finger. Residues 2927 to 3031 (PLTEKDYEGL…SFFVQKLKGF (105 aa)) form the Bromo domain.

This sequence belongs to the PBTF family. In terms of assembly, interacts with MAZ. Interacts with KEAP1. Component of the NURF-1 ISWI chromatin remodeling complex (also called the nucleosome-remodeling factor (NURF) complex) at least composed of SMARCA1 (isoform 2), BPTF, RBBP4 and RBBP7. Within the complex interacts with isoform 2 of SMARCA1. Component of the BPFT-SMARCA1 complex at least composed of SMARCA1 (isoform 1), BPFT, RBBP4 and RBBP7; the complex is catalytically inactive and does not remodel chromatin. Within the complex interacts with isoform 1 of SMARCA1. Component of the NURF-5 ISWI chromatin remodeling complex at least composed of SMARCA5/SNF2H and BPTF. Within NURF-5 ISWI chromatin remodeling complex interacts with SMARCA5/SNF2H. Phosphorylation enhances DNA-binding. Post-translationally, highly susceptible to proteolysis. As to expression, ubiquitously expressed, with highest levels in testis. Present in kidney, liver and brain. In the brain, highest levels are found in motor cortex (at protein level).

The protein localises to the cytoplasm. It localises to the nucleus. Regulatory subunit of the ATP-dependent NURF-1 and NURF-5 ISWI chromatin remodeling complexes, which form ordered nucleosome arrays on chromatin and facilitate access to DNA during DNA-templated processes such as DNA replication, transcription, and repair. The NURF-1 ISWI chromatin remodeling complex has a lower ATP hydrolysis rate than the NURF-5 ISWI chromatin remodeling complex. Within the NURF-1 ISWI chromatin-remodeling complex, binds to the promoters of En1 and En2 to positively regulate their expression and promote brain development. Histone-binding protein which binds to H3 tails trimethylated on 'Lys-4' (H3K4me3), which mark transcription start sites of active genes. Binds to histone H3 tails dimethylated on 'Lys-4' (H3K4Me2) to a lesser extent. May also regulate transcription through direct binding to DNA or transcription factors. This chain is Nucleosome-remodeling factor subunit BPTF (BPTF), found in Homo sapiens (Human).